We begin with the raw amino-acid sequence, 80 residues long: Clavaspirin (80 aa).

Residues 1-17 (MKTIILILLILGLGIDA) form the signal peptide. Residues 18–29 (KSLEESKADEEK) constitute a propeptide that is removed on maturation. At L52 the chain carries Leucine amide. Positions 53 to 80 (GDDQQDNGKFYGYYAEDNGKHWYDTGDQ) are excised as a propeptide.

In terms of tissue distribution, pharyngeal tissues and hemocytes.

Its subcellular location is the secreted. In terms of biological role, exhibits broad-spectrum antimicrobial activity against both Gram-positive and Gram-negative bacteria. Has potent hemolytic activity. The polypeptide is Clavaspirin (Styela clava (Sea squirt)).